The primary structure comprises 361 residues: Uroporphyrinogen decarboxylase (361 aa).

Substrate-binding positions include 27 to 31 (RQAGR), D77, Y154, T209, and H327.

It belongs to the uroporphyrinogen decarboxylase family. In terms of assembly, homodimer.

The protein resides in the cytoplasm. It catalyses the reaction uroporphyrinogen III + 4 H(+) = coproporphyrinogen III + 4 CO2. It participates in porphyrin-containing compound metabolism; protoporphyrin-IX biosynthesis; coproporphyrinogen-III from 5-aminolevulinate: step 4/4. In terms of biological role, catalyzes the decarboxylation of four acetate groups of uroporphyrinogen-III to yield coproporphyrinogen-III. In Coxiella burnetii (strain Dugway 5J108-111), this protein is Uroporphyrinogen decarboxylase.